The following is a 204-amino-acid chain: uncharacterized protein (204 aa).

The signal sequence occupies residues 1 to 21; sequence MIKKFLLFAMLNIFLTNKAHS.

This is an uncharacterized protein from Borreliella burgdorferi (strain ATCC 35210 / DSM 4680 / CIP 102532 / B31) (Borrelia burgdorferi).